A 554-amino-acid chain; its full sequence is MASPPAHRSSKAADEELPKASSTFHPSLWGSFFLTYQPPTAPQRANMKERAEVLRERVRKVLKGSTTDQLPETVNLILTLQRLGLGYYYENEIDKLLHQIYSNSDYNEKDLNLVSQRFYLLRKNGYDVPSDVFLNFKTEEGGFACAAADTRSLLSLYNAAYLRKHGEEVLDEAISSTRLRLQDLLGRLLPESPFAKEVSSSLRTPLFRRVGILEARNYIPIYEKEATRNEAVLELAKLNFNLQQLDFCEELKHCSAWWNEMIAKSKLTFVRDRIVEEYFWMNGACCDPPYSLSRIILTKITGLITIIDDMFDTHGTTEDCMKFAEAFGRWDESAIHLLPEYMKDFYILMLETFQSFEDALGPEKSYRVLYLKQAMERLVELYSKEIKWRDQDYVATMSEHLQVSAESIGANALTCSAYAGMGDMSITKETFEWALSFPQFIRTFGSFVRLSNDVVSTKREQTKDHSPSTVHCYMKEHGTTMDDACEKIKELIEDSWKDMLEQSLALKGLPKVVPQLVFDFSRTTDNMYRDRDALTSSEALKEMIQLLFVEPIPE.

Residues Asp308 and Asp312 each coordinate Mg(2+). Substrate contacts are provided by Asp308 and Asp312. Residues 308–312 carry the DDXXD motif motif; that stretch reads DDMFD. The tract at residues 407-411 is determine the stereoselectivity of the enzyme; sequence SIGAN. Residues Arg449 and Asn452 each coordinate substrate. Asn452, Ser456, and Glu460 together coordinate Mg(2+).

This sequence belongs to the terpene synthase family. In terms of assembly, monomer. Mg(2+) is required as a cofactor. It depends on Mn(2+) as a cofactor. As to expression, highly expressed in the husk. Detected in leaves.

The protein localises to the cytoplasm. The enzyme catalyses (2E,6E)-farnesyl diphosphate = sesquithujene + diphosphate. It carries out the reaction (2Z,6Z)-farnesyl diphosphate = (1S,5S,6S)-alpha-bergamotene + diphosphate. The catalysed reaction is (2E,6E)-farnesyl diphosphate = (E)-beta-farnesene + diphosphate. It catalyses the reaction (2E,6E)-farnesyl diphosphate = (S)-beta-bisabolene + diphosphate. The enzyme catalyses (2Z,6E)-farnesyl diphosphate = (-)-beta-curcumene + diphosphate. It carries out the reaction (2E,6E)-farnesyl diphosphate = gamma-curcumene + diphosphate. The catalysed reaction is (2E,6E)-farnesyl diphosphate = sesquisabinene B + diphosphate. Its pathway is secondary metabolite biosynthesis; terpenoid biosynthesis. Functionally, sesquiterpene synthase involved in the production after herbivore attack of a blend of volatiles that attracts natural enemies of herbivores. Converts farnesyl diphosphate to sesquithujene, (S)-beta-bisabolene, (Z)-alpha-bergamotene, sesquisabinene B and several minor products. Can also act in vitro as a monoterpene synthase, converting geranyl diphosphate to (S)-(-)-limonene, beta-myrcene and 11 other monoterpenes. This chain is Sesquithujene synthase A, found in Zea mays (Maize).